Here is a 274-residue protein sequence, read N- to C-terminus: NH(3)-dependent NAD(+) synthetase (274 aa).

27–34 serves as a coordination point for ATP; that stretch reads GLSGGIDS. Asp-33 is a Mg(2+) binding site. Arg-121 lines the deamido-NAD(+) pocket. Thr-141 contacts ATP. Position 146 (Glu-146) interacts with Mg(2+). ATP-binding residues include Lys-170 and Ser-192.

The protein belongs to the NAD synthetase family. In terms of assembly, homodimer.

The enzyme catalyses deamido-NAD(+) + NH4(+) + ATP = AMP + diphosphate + NAD(+) + H(+). Its pathway is cofactor biosynthesis; NAD(+) biosynthesis; NAD(+) from deamido-NAD(+) (ammonia route): step 1/1. In terms of biological role, catalyzes the ATP-dependent amidation of deamido-NAD to form NAD. Uses ammonia as a nitrogen source. This chain is NH(3)-dependent NAD(+) synthetase, found in Helicobacter hepaticus (strain ATCC 51449 / 3B1).